A 347-amino-acid polypeptide reads, in one-letter code: Phosphoribosylformylglycinamidine cyclo-ligase (347 aa).

The protein belongs to the AIR synthase family.

It is found in the cytoplasm. The catalysed reaction is 2-formamido-N(1)-(5-O-phospho-beta-D-ribosyl)acetamidine + ATP = 5-amino-1-(5-phospho-beta-D-ribosyl)imidazole + ADP + phosphate + H(+). It functions in the pathway purine metabolism; IMP biosynthesis via de novo pathway; 5-amino-1-(5-phospho-D-ribosyl)imidazole from N(2)-formyl-N(1)-(5-phospho-D-ribosyl)glycinamide: step 2/2. The protein is Phosphoribosylformylglycinamidine cyclo-ligase of Alkaliphilus metalliredigens (strain QYMF).